Here is a 206-residue protein sequence, read N- to C-terminus: N-(5'-phosphoribosyl)anthranilate isomerase (206 aa).

Belongs to the TrpF family.

It catalyses the reaction N-(5-phospho-beta-D-ribosyl)anthranilate = 1-(2-carboxyphenylamino)-1-deoxy-D-ribulose 5-phosphate. It participates in amino-acid biosynthesis; L-tryptophan biosynthesis; L-tryptophan from chorismate: step 3/5. This chain is N-(5'-phosphoribosyl)anthranilate isomerase, found in Pseudomonas putida (strain GB-1).